The chain runs to 297 residues: Tyrosine recombinase XerD (297 aa).

Positions 1–86 constitute a Core-binding (CB) domain; the sequence is MKDSALIELF…AMRKLFQYLY (86 aa). Residues 107 to 291 form the Tyr recombinase domain; sequence RLPKYLTEQQ…AKERLKHLHE (185 aa). Residues arginine 147, lysine 171, histidine 243, arginine 246, and histidine 269 contribute to the active site. Tyrosine 278 serves as the catalytic O-(3'-phospho-DNA)-tyrosine intermediate.

It belongs to the 'phage' integrase family. XerD subfamily. Forms a cyclic heterotetrameric complex composed of two molecules of XerC and two molecules of XerD.

Its subcellular location is the cytoplasm. Its function is as follows. Site-specific tyrosine recombinase, which acts by catalyzing the cutting and rejoining of the recombining DNA molecules. The XerC-XerD complex is essential to convert dimers of the bacterial chromosome into monomers to permit their segregation at cell division. It also contributes to the segregational stability of plasmids. This chain is Tyrosine recombinase XerD, found in Pasteurella multocida (strain Pm70).